The sequence spans 177 residues: Peptidyl-tRNA hydrolase (177 aa).

Tyr-12 is a binding site for tRNA. His-17 functions as the Proton acceptor in the catalytic mechanism. Phe-63, Asn-65, and Asn-111 together coordinate tRNA.

It belongs to the PTH family. In terms of assembly, monomer.

The protein localises to the cytoplasm. The enzyme catalyses an N-acyl-L-alpha-aminoacyl-tRNA + H2O = an N-acyl-L-amino acid + a tRNA + H(+). Functionally, hydrolyzes ribosome-free peptidyl-tRNAs (with 1 or more amino acids incorporated), which drop off the ribosome during protein synthesis, or as a result of ribosome stalling. In terms of biological role, catalyzes the release of premature peptidyl moieties from peptidyl-tRNA molecules trapped in stalled 50S ribosomal subunits, and thus maintains levels of free tRNAs and 50S ribosomes. The polypeptide is Peptidyl-tRNA hydrolase (Buchnera aphidicola subsp. Acyrthosiphon pisum (strain 5A)).